We begin with the raw amino-acid sequence, 503 residues long: Probable cytosol aminopeptidase (503 aa).

Residues lysine 270 and aspartate 275 each contribute to the Mn(2+) site. The active site involves lysine 282. Aspartate 293, aspartate 352, and glutamate 354 together coordinate Mn(2+). The active site involves arginine 356.

The protein belongs to the peptidase M17 family. It depends on Mn(2+) as a cofactor.

Its subcellular location is the cytoplasm. The catalysed reaction is Release of an N-terminal amino acid, Xaa-|-Yaa-, in which Xaa is preferably Leu, but may be other amino acids including Pro although not Arg or Lys, and Yaa may be Pro. Amino acid amides and methyl esters are also readily hydrolyzed, but rates on arylamides are exceedingly low.. It carries out the reaction Release of an N-terminal amino acid, preferentially leucine, but not glutamic or aspartic acids.. In terms of biological role, presumably involved in the processing and regular turnover of intracellular proteins. Catalyzes the removal of unsubstituted N-terminal amino acids from various peptides. The polypeptide is Probable cytosol aminopeptidase (Erwinia tasmaniensis (strain DSM 17950 / CFBP 7177 / CIP 109463 / NCPPB 4357 / Et1/99)).